Reading from the N-terminus, the 450-residue chain is Phosphoglucosamine mutase (450 aa).

Residue S103 is the Phosphoserine intermediate of the active site. Residues S103, D243, D245, and D247 each contribute to the Mg(2+) site. At S103 the chain carries Phosphoserine.

Belongs to the phosphohexose mutase family. Mg(2+) is required as a cofactor. Activated by phosphorylation.

The catalysed reaction is alpha-D-glucosamine 1-phosphate = D-glucosamine 6-phosphate. In terms of biological role, catalyzes the conversion of glucosamine-6-phosphate to glucosamine-1-phosphate. The chain is Phosphoglucosamine mutase from Latilactobacillus sakei subsp. sakei (strain 23K) (Lactobacillus sakei subsp. sakei).